Here is a 318-residue protein sequence, read N- to C-terminus: D-alanine--D-alanine ligase (318 aa).

Residues Lys-116–Ala-311 enclose the ATP-grasp domain. Ser-142–Thr-197 is an ATP binding site. Asp-265, Glu-278, and Asn-280 together coordinate Mg(2+).

The protein belongs to the D-alanine--D-alanine ligase family. The cofactor is Mg(2+). It depends on Mn(2+) as a cofactor.

Its subcellular location is the cytoplasm. It catalyses the reaction 2 D-alanine + ATP = D-alanyl-D-alanine + ADP + phosphate + H(+). Its pathway is cell wall biogenesis; peptidoglycan biosynthesis. Cell wall formation. The protein is D-alanine--D-alanine ligase of Pseudomonas entomophila (strain L48).